A 244-amino-acid chain; its full sequence is ATP synthase subunit O, mitochondrial (244 aa).

The N-terminal 45 residues, 1–45 (MAMTGRARSMGFSILQKALSSAQRSNAHRSILCPTLSNSELLRNY), are a transit peptide targeting the mitochondrion.

This sequence belongs to the ATPase delta chain family. In terms of assembly, F-type ATPases have 2 components, CF(1) - the catalytic core - and CF(0) - the membrane proton channel. CF(1) has five subunits: alpha(3), beta(3), gamma(1), delta(1), epsilon(1). CF(0) has three main subunits: a, b and c.

The protein localises to the mitochondrion. Its subcellular location is the mitochondrion inner membrane. In terms of biological role, mitochondrial membrane ATP synthase (F(1)F(0) ATP synthase or Complex V) produces ATP from ADP in the presence of a proton gradient across the membrane which is generated by electron transport complexes of the respiratory chain. F-type ATPases consist of two structural domains, F(1) - containing the extramembraneous catalytic core and F(0) - containing the membrane proton channel, linked together by a central stalk and a peripheral stalk. During catalysis, ATP synthesis in the catalytic domain of F(1) is coupled via a rotary mechanism of the central stalk subunits to proton translocation. Part of the complex F(0) domain and the peripheric stalk, which acts as a stator to hold the catalytic alpha(3)beta(3) subcomplex and subunit a/ATP6 static relative to the rotary elements. This is ATP synthase subunit O, mitochondrial from Ipomoea batatas (Sweet potato).